The primary structure comprises 270 residues: 4-hydroxy-tetrahydrodipicolinate reductase (270 aa).

NAD(+)-binding positions include 11–16 (GAGGRM) and glutamate 37. Arginine 38 is a binding site for NADP(+). Residues 101 to 103 (GTT) and 125 to 128 (APNM) contribute to the NAD(+) site. Histidine 158 serves as the catalytic Proton donor/acceptor. Histidine 159 lines the (S)-2,3,4,5-tetrahydrodipicolinate pocket. Catalysis depends on lysine 162, which acts as the Proton donor. Residue 168-169 (GT) coordinates (S)-2,3,4,5-tetrahydrodipicolinate.

The protein belongs to the DapB family.

It localises to the cytoplasm. It catalyses the reaction (S)-2,3,4,5-tetrahydrodipicolinate + NAD(+) + H2O = (2S,4S)-4-hydroxy-2,3,4,5-tetrahydrodipicolinate + NADH + H(+). The catalysed reaction is (S)-2,3,4,5-tetrahydrodipicolinate + NADP(+) + H2O = (2S,4S)-4-hydroxy-2,3,4,5-tetrahydrodipicolinate + NADPH + H(+). Its pathway is amino-acid biosynthesis; L-lysine biosynthesis via DAP pathway; (S)-tetrahydrodipicolinate from L-aspartate: step 4/4. Its function is as follows. Catalyzes the conversion of 4-hydroxy-tetrahydrodipicolinate (HTPA) to tetrahydrodipicolinate. In Shewanella oneidensis (strain ATCC 700550 / JCM 31522 / CIP 106686 / LMG 19005 / NCIMB 14063 / MR-1), this protein is 4-hydroxy-tetrahydrodipicolinate reductase.